The following is a 159-amino-acid chain: Endoribonuclease YbeY (159 aa).

Residues H125, H129, and H135 each contribute to the Zn(2+) site.

It belongs to the endoribonuclease YbeY family. It depends on Zn(2+) as a cofactor.

It is found in the cytoplasm. In terms of biological role, single strand-specific metallo-endoribonuclease involved in late-stage 70S ribosome quality control and in maturation of the 3' terminus of the 16S rRNA. The protein is Endoribonuclease YbeY of Enterococcus faecalis (strain ATCC 700802 / V583).